The following is an 864-amino-acid chain: DNA double-strand break repair Rad50 ATPase (864 aa).

Residues 32-38 (NGAGKSS) and Gln131 contribute to the ATP site. Coiled coils occupy residues 176-319 (RELD…EKAI) and 376-413 (DIDK…EKNE). One can recognise a Zinc-hook domain in the interval 380–478 (VNSLEQKVEE…ELNKIEREYR (99 aa)). Positions 426 and 429 each coordinate Zn(2+). Positions 440-697 (KIIKEAKSYI…DREKIINAIN (258 aa)) form a coiled coil.

The protein belongs to the SMC family. RAD50 subfamily. Homodimer. Forms a heterotetramer composed of two Mre11 subunits and two Rad50 subunits. The cofactor is Zn(2+).

Its function is as follows. Part of the Rad50/Mre11 complex, which is involved in the early steps of DNA double-strand break (DSB) repair. The complex may facilitate opening of the processed DNA ends to aid in the recruitment of HerA and NurA. Rad50 controls the balance between DNA end bridging and DNA resection via ATP-dependent structural rearrangements of the Rad50/Mre11 complex. This is DNA double-strand break repair Rad50 ATPase from Saccharolobus solfataricus (strain ATCC 35092 / DSM 1617 / JCM 11322 / P2) (Sulfolobus solfataricus).